We begin with the raw amino-acid sequence, 227 residues long: Phosphoglycolate phosphatase (227 aa).

The active-site Nucleophile is the Asp14. Residues Asp14, Asp16, and Asp177 each coordinate Mg(2+).

The protein belongs to the HAD-like hydrolase superfamily. CbbY/CbbZ/Gph/YieH family. Mg(2+) serves as cofactor.

The catalysed reaction is 2-phosphoglycolate + H2O = glycolate + phosphate. It participates in organic acid metabolism; glycolate biosynthesis; glycolate from 2-phosphoglycolate: step 1/1. In terms of biological role, specifically catalyzes the dephosphorylation of 2-phosphoglycolate. Is involved in the dissimilation of the intracellular 2-phosphoglycolate formed during the DNA repair of 3'-phosphoglycolate ends, a major class of DNA lesions induced by oxidative stress. This chain is Phosphoglycolate phosphatase, found in Thiobacillus denitrificans (strain ATCC 25259 / T1).